Here is an 88-residue protein sequence, read N- to C-terminus: Protein ORGAN SIZE RELATED 1 (88 aa).

Residues 25–76 (ITARSVALLLFLSLLLLILPPFLPPLPPPPATLLLLPLLLMILLIFLAFSPS) are organ Size Related (OSR) domain. The next 2 helical transmembrane spans lie at 30 to 50 (VALLLFLSLLLLILPPFLPPL) and 53 to 73 (PPATLLLLPLLLMILLIFLAF).

Belongs to the plant organ size related (OSR) protein family. As to expression, mostly expressed in flowers, and, to a lower extent, in leaves and cotyledons.

The protein resides in the membrane. It is found in the endoplasmic reticulum. The protein localises to the nucleus. Its subcellular location is the cytoplasm. Together with ARGOS and ARL, regulates organ growth and final organ size. Promotes both cell expansion and proliferation-dependent organ growth, in an ANT-dependent manner. This chain is Protein ORGAN SIZE RELATED 1, found in Arabidopsis thaliana (Mouse-ear cress).